The sequence spans 443 residues: MSEMTPREIVHELDRHIIGQKNAKRAVSVALRNRWRRMQLSGDLRQEVTPKNILMIGPTGVGKTEIARRLAKLANAPFIKVEATKFTEVGYVGKEVETIIRDLADIAVKMAKEQETKKVKYRAEEAAEERILDVLLPPAENQWGEKEQNEDKGTRQTFRKKLREGQLDDKEIEIDVALPQVGVEIMAPPGMEEMTNQLQGMFQNLSGSQKKKKKLKIKEAFKLLIEEEAARLVNQEDLKANAIESLEQNGIVFIDEIDKICKREGSNSGGDVSREGVQRDLLPLVEGSTVSTKHGMVKTDHILFIASGAFQMAKPSDLIPELQGRLPIRVELEALTAGDFIRILTEPNASLTEQYIALLKTEGVDVDFTQDGIERIAQAAWQVNERTENIGARRLHTVMERLMEEISFDASEKSGEQLTVDAKYVNDHLEMLVENEDLSRFIL.

ATP contacts are provided by residues isoleucine 18 and 60 to 65; that span reads GVGKTE. Positions 138 to 158 are disordered; sequence PAENQWGEKEQNEDKGTRQTF. The segment covering 143-154 has biased composition (basic and acidic residues); that stretch reads WGEKEQNEDKGT. 3 residues coordinate ATP: aspartate 255, glutamate 321, and arginine 393.

This sequence belongs to the ClpX chaperone family. HslU subfamily. A double ring-shaped homohexamer of HslV is capped on each side by a ring-shaped HslU homohexamer. The assembly of the HslU/HslV complex is dependent on binding of ATP.

It localises to the cytoplasm. Its function is as follows. ATPase subunit of a proteasome-like degradation complex; this subunit has chaperone activity. The binding of ATP and its subsequent hydrolysis by HslU are essential for unfolding of protein substrates subsequently hydrolyzed by HslV. HslU recognizes the N-terminal part of its protein substrates and unfolds these before they are guided to HslV for hydrolysis. The protein is ATP-dependent protease ATPase subunit HslU of Pseudoalteromonas atlantica (strain T6c / ATCC BAA-1087).